Here is a 389-residue protein sequence, read N- to C-terminus: Chitin-binding protein CbpD (389 aa).

A signal peptide spans Met-1–Ala-25. The Chitin-binding type-4 domain occupies His-26 to Ser-208. The residue at position 37 (Tyr-37) is a Phosphotyrosine. A Phosphoserine modification is found at Ser-210.

The protein localises to the secreted. Its function is as follows. Binds but does not hydrolyze chitin. The protein is Chitin-binding protein CbpD (cpbD) of Pseudomonas aeruginosa (strain UCBPP-PA14).